The sequence spans 152 residues: FAD synthase (152 aa).

Residues threonine 16–phenylalanine 17, histidine 21–histidine 24, aspartate 101, and tyrosine 129 each bind ATP.

The protein belongs to the archaeal FAD synthase family. As to quaternary structure, homodimer. It depends on a divalent metal cation as a cofactor.

The catalysed reaction is FMN + ATP + H(+) = FAD + diphosphate. Its pathway is cofactor biosynthesis; FAD biosynthesis; FAD from FMN: step 1/1. Catalyzes the transfer of the AMP portion of ATP to flavin mononucleotide (FMN) to produce flavin adenine dinucleotide (FAD) coenzyme. This chain is FAD synthase, found in Methanocaldococcus vulcanius (strain ATCC 700851 / DSM 12094 / M7) (Methanococcus vulcanius).